Reading from the N-terminus, the 236-residue chain is Endonuclease NucS (236 aa).

The protein belongs to the NucS endonuclease family.

The protein resides in the cytoplasm. Its function is as follows. Cleaves both 3' and 5' ssDNA extremities of branched DNA structures. The protein is Endonuclease NucS of Saccharolobus solfataricus (strain ATCC 35092 / DSM 1617 / JCM 11322 / P2) (Sulfolobus solfataricus).